Reading from the N-terminus, the 244-residue chain is Centromere protein H (244 aa).

The residue at position 1 (methionine 1) is an N-acetylmethionine. The disordered stretch occupies residues 1–33 (METQSEEQAVTKPADSGGEGGPPQVAGAQAARP). Serine 16 carries the post-translational modification Phosphoserine. Low complexity predominate over residues 22 to 31 (PPQVAGAQAA). Lysine 64 is covalently cross-linked (Glycyl lysine isopeptide (Lys-Gly) (interchain with G-Cter in SUMO2)). Threonine 65 carries the post-translational modification Phosphothreonine. Coiled coils occupy residues 66 to 104 (PEQI…DRMQ) and 146 to 189 (DLEE…MENS).

Belongs to the CENP-H/MCM16 family. Self-associates. Component of the CENPA-NAC complex, at least composed of CENPA, CENPC, CENPH, CENPM, CENPN, CENPT and CENPU. The CENPA-NAC complex interacts with the CENPA-CAD complex, composed of CENPI, CENPK, CENPL, CENPO, CENPP, CENPQ, CENPR and CENPS. Interacts with KIF2C and NDC80.

Its subcellular location is the nucleus. The protein localises to the chromosome. It localises to the centromere. The protein resides in the kinetochore. In terms of biological role, component of the CENPA-NAC (nucleosome-associated) complex, a complex that plays a central role in assembly of kinetochore proteins, mitotic progression and chromosome segregation. The CENPA-NAC complex recruits the CENPA-CAD (nucleosome distal) complex and may be involved in incorporation of newly synthesized CENPA into centromeres. This Bos taurus (Bovine) protein is Centromere protein H (CENPH).